The primary structure comprises 96 residues: UPF0235 protein SO_3356 (96 aa).

The protein belongs to the UPF0235 family.

This is UPF0235 protein SO_3356 from Shewanella oneidensis (strain ATCC 700550 / JCM 31522 / CIP 106686 / LMG 19005 / NCIMB 14063 / MR-1).